The chain runs to 39 residues: Large ribosomal subunit protein bL36 (39 aa).

Belongs to the bacterial ribosomal protein bL36 family.

The protein is Large ribosomal subunit protein bL36 of Leuconostoc mesenteroides subsp. mesenteroides (strain ATCC 8293 / DSM 20343 / BCRC 11652 / CCM 1803 / JCM 6124 / NCDO 523 / NBRC 100496 / NCIMB 8023 / NCTC 12954 / NRRL B-1118 / 37Y).